The primary structure comprises 395 residues: Elongation factor Tu (395 aa).

The 195-residue stretch at 10–204 (KPHVNIGTIG…IVDEYIPTPE (195 aa)) folds into the tr-type G domain. Residues 19–26 (GHVDHGKT) are G1. Residue 19-26 (GHVDHGKT) coordinates GTP. T26 is a Mg(2+) binding site. The interval 60 to 64 (GITIN) is G2. Residues 81–84 (DAPG) are G3. Residues 81–85 (DAPGH) and 136–139 (NKAD) contribute to the GTP site. Positions 136-139 (NKAD) are G4. The interval 174–176 (SAL) is G5.

Belongs to the TRAFAC class translation factor GTPase superfamily. Classic translation factor GTPase family. EF-Tu/EF-1A subfamily. In terms of assembly, monomer.

The protein resides in the cytoplasm. It carries out the reaction GTP + H2O = GDP + phosphate + H(+). GTP hydrolase that promotes the GTP-dependent binding of aminoacyl-tRNA to the A-site of ribosomes during protein biosynthesis. This chain is Elongation factor Tu, found in Lactococcus lactis subsp. lactis (strain IL1403) (Streptococcus lactis).